Here is a 382-residue protein sequence, read N- to C-terminus: Dual-specificity RNA methyltransferase RlmN (382 aa).

The active-site Proton acceptor is the Glu96. One can recognise a Radical SAM core domain in the interval 102 to 342; that stretch reads QGKRGTLCVS…VRTTRGEDID (241 aa). Residues Cys109 and Cys345 are joined by a disulfide bond. 3 residues coordinate [4Fe-4S] cluster: Cys116, Cys120, and Cys123. S-adenosyl-L-methionine-binding positions include 170-171, Ser202, 224-226, and Asn302; these read GE and SLH. The active-site S-methylcysteine intermediate is the Cys345.

The protein belongs to the radical SAM superfamily. RlmN family. Requires [4Fe-4S] cluster as cofactor.

The protein resides in the cytoplasm. The catalysed reaction is adenosine(2503) in 23S rRNA + 2 reduced [2Fe-2S]-[ferredoxin] + 2 S-adenosyl-L-methionine = 2-methyladenosine(2503) in 23S rRNA + 5'-deoxyadenosine + L-methionine + 2 oxidized [2Fe-2S]-[ferredoxin] + S-adenosyl-L-homocysteine. The enzyme catalyses adenosine(37) in tRNA + 2 reduced [2Fe-2S]-[ferredoxin] + 2 S-adenosyl-L-methionine = 2-methyladenosine(37) in tRNA + 5'-deoxyadenosine + L-methionine + 2 oxidized [2Fe-2S]-[ferredoxin] + S-adenosyl-L-homocysteine. Specifically methylates position 2 of adenine 2503 in 23S rRNA and position 2 of adenine 37 in tRNAs. m2A2503 modification seems to play a crucial role in the proofreading step occurring at the peptidyl transferase center and thus would serve to optimize ribosomal fidelity. This chain is Dual-specificity RNA methyltransferase RlmN, found in Pseudomonas syringae pv. syringae (strain B728a).